The chain runs to 364 residues: Peptidoglycan transport system permease protein YejB (364 aa).

The next 6 membrane-spanning stretches (helical) occupy residues 9 to 29 (LALMIPTIVGIMGISFLVIQF), 134 to 154 (SASLGFWILIISYVISIPLGI), 171 to 191 (IIIIGYAVPSFLFGILLIVLF), 219 to 239 (IIDYFWHLTLPLIALSLSAFA), 283 to 303 (IVIAGFPGAFISAFFTGSLLI), and 325 to 345 (YPIVFGTLFIFSLMGLVVGLL). The 220-residue stretch at 131-350 (LPVSASLGFW…VVGLLSDLIY (220 aa)) folds into the ABC transmembrane type-1 domain.

Belongs to the binding-protein-dependent transport system permease family. In terms of assembly, the complex is composed of one ATP-binding protein (YejF), two transmembrane proteins (YejB and YejE) and a solute-binding protein (YepA or YejA).

The protein localises to the cell inner membrane. Functionally, part of the ABC transporter complex YejBEF-YepA involved in the uptake of muropeptides, the breakdown products of cell wall peptidoglycan. The import of muropeptides into the cell enables peptidoglycan recycling, which is vital for cell wall integrity in this bacterium. Is also probably part of the ABC transporter complex YejABEF, which is likely involved in broad-spectrum peptide import. Responsible for the translocation of the substrate across the membrane. In Agrobacterium fabrum (strain C58 / ATCC 33970) (Agrobacterium tumefaciens (strain C58)), this protein is Peptidoglycan transport system permease protein YejB.